A 286-amino-acid polypeptide reads, in one-letter code: Deleted in azoospermia-like-A (286 aa).

In terms of domain architecture, RRM spans 33–114 (NTVFVGGIDI…PAIRKICTYV (82 aa)). The DAZ domain occupies 155 to 180 (ACPYPSSPPMAIQQIPVGCQQPGYFQ).

This sequence belongs to the RRM DAZ family. Interacts with the C-terminus of pabp1 and with epabp. Prior to oocyte maturation, found in a complex with epabp and pum2 proteins and spdy1 mRNA; pum2 dissociates from the complex during maturation. As to expression, germ-line specific. Oocyte mRNA expression is first restricted to the granulo-fibrillar material (GFM) of the mitochondrial cloud and then to the oocyte germ plasm at the vegetal cortex. Remains an mRNA component of the germ plasm until the neurula stage. In 2-8 cell embryos, expressed in the germ plasm matrix between germinal granules and mitochondria. Expressed in primordial germ cells (PGCs) later in embryogenesis. In addition to the ovaries of adult females, expressed in the testis of adult and juvenile males in spermatogonia and spermatocytes. The protein is restricted to the embryonic germ plasm and primordial germ cells.

The protein localises to the cytoplasm. Functionally, RNA-binding protein that is required for primordial germ cell (PGC) differentiation and indirectly necessary for the migration of PGCs through the endoderm. May promote meiotic cell division during spermatogenesis. Shows a preference for G- and U-rich RNAs and probably binds the 3'-UTR of target mRNAs. Stimulates the initiation of translation of mRNAs through the recruitment of poly(A)-binding proteins (PABPs). This Xenopus laevis (African clawed frog) protein is Deleted in azoospermia-like-A (dazl-a).